Reading from the N-terminus, the 274-residue chain is Putative hydro-lyase SAV_6940 (274 aa).

The protein belongs to the D-glutamate cyclase family.

The chain is Putative hydro-lyase SAV_6940 from Streptomyces avermitilis (strain ATCC 31267 / DSM 46492 / JCM 5070 / NBRC 14893 / NCIMB 12804 / NRRL 8165 / MA-4680).